An 87-amino-acid chain; its full sequence is Small ribosomal subunit protein uS15c (87 aa).

It belongs to the universal ribosomal protein uS15 family. In terms of assembly, part of the 30S ribosomal subunit.

It is found in the plastid. The protein resides in the chloroplast. This Solanum bulbocastanum (Wild potato) protein is Small ribosomal subunit protein uS15c (rps15).